A 2588-amino-acid chain; its full sequence is Histone-lysine N-methyltransferase, H3 lysine-36 specific (2588 aa).

Residues S110 and S118 each carry the phosphoserine modification. 2 disordered regions span residues 209–264 and 277–307; these read GSEQ…LGDT and LSFQ…TSQE. Basic and acidic residues predominate over residues 235–249; the sequence is EKQKNKQRSEVDGSN. The span at 298-307 shows a compositional bias: polar residues; the sequence is GTSSPSTSQE. Residues S380 and S383 each carry the phosphoserine modification. A disordered region spans residues 383 to 403; it reads SADEKEKPCAKSRVRKSSDNI. A Glycyl lysine isopeptide (Lys-Gly) (interchain with G-Cter in SUMO2) cross-link involves residue K802. Disordered stretches follow at residues 830–899, 947–987, and 1008–1133; these read ASYR…SDKR, ERKR…PGKE, and FDSK…PRLN. Over residues 855–874 the composition is skewed to polar residues; sequence GSSTPNSEKPGDSTQDSVHQ. The span at 881-895 shows a compositional bias: low complexity; it reads SALSGELSSSLSSLA. Residues 1008 to 1033 show a composition bias toward basic and acidic residues; sequence FDSKAKQSDPDKNLEKEPSFENRKGP. Positions 1054-1073 are enriched in basic residues; that stretch reads PKKRWQRLNQRRPKPGKRAN. A Glycyl lysine isopeptide (Lys-Gly) (interchain with G-Cter in SUMO2) cross-link involves residue K1237. The interval 1279–1324 is disordered; sequence ASPRPALESEELLVKTPGNYESKRQRKPTKKLLESNDLDPGFMPKK. S1408 is subject to Phosphoserine. PHD-type zinc fingers lie at residues 1441–1487, 1488–1544, and 1605–1649; these read ENVC…CHTG, IHTC…CHAA, and VSWC…CKAG. One can recognise a PWWP domain in the interval 1654–1716; it reads YREIVWVKVG…QARVFPYMEG (63 aa). The AWS domain occupies 1788–1838; the sequence is SEIPRCNCKATDENPCGIDSECINRMLLYECHPTVCPAGVRCQNQCFSKRQ. Positions 1840-1957 constitute an SET domain; it reads PDVEIFRTLQ…AGTELTFNYN (118 aa). Residues 1850–1852, 1892–1895, 1918–1919, N1963, and K1969 contribute to the S-adenosyl-L-methionine site; these read RGW, TNFY, and NH. An inhibits enzyme activity in the absence of bound histone region spans residues 1958-1964; that stretch reads LECLGNG. Positions 1964–1980 constitute a Post-SET domain; it reads GKTVCKCGAPNCSGFLG. Residues 1989–2010 are disordered; that stretch reads VTEEKSRKFKRKPHGKRRSQGE. Basic residues predominate over residues 1995–2006; sequence RKFKRKPHGKRR. The segment at 2016 to 2063 adopts a PHD-type 4; atypical zinc-finger fold; it reads EDECFSCGDAGQLVSCKKPGCPKVYHADCLNLTKRPAGKWECPWHQCD. Disordered regions lie at residues 2105-2320, 2333-2423, 2447-2521, and 2560-2588; these read PCGP…PPPE, KEKA…PSEH, YESA…WGLG, and RGQD…SEKK. The span at 2179 to 2196 shows a compositional bias: basic and acidic residues; sequence RPPERTDSSSHLLDRIRD. Positions 2201-2212 are enriched in polar residues; it reads GTKSQSLVSSQR. The span at 2213 to 2223 shows a compositional bias: basic and acidic residues; that stretch reads PQDRPPAKEGP. Residues 2232-2249 show a composition bias toward low complexity; sequence SPMTRPSSSPSVSSLPLE. The segment covering 2250–2261 has biased composition (basic and acidic residues); it reads RPLRMTDSRLDK. A Phosphoserine modification is found at S2267. At T2360 the chain carries Phosphothreonine. A Phosphoserine modification is found at S2369. K2509 participates in a covalent cross-link: Glycyl lysine isopeptide (Lys-Gly) (interchain with G-Cter in SUMO2).

The protein belongs to the class V-like SAM-binding methyltransferase superfamily. In terms of assembly, interacts with AR DNA- and ligand-binding domains. Interacts with the ligand-binding domains of RARA and THRA in the absence of ligand; in the presence of ligand the interaction is severely disrupted but some binding still occurs. Interacts with the ligand-binding domains of RXRA and ESRRA only in the presence of ligand. Interacts with ZNF496. As to expression, expressed in the embryo and the outer region of the uterine decidua at early post-implantation 5.5 dpc stage. Uniformly expressed in embryonic and extraembryonic tissues during gastrulation stage 7.5 dpc. Expressed differentially after stage 14.5 dpc with highest expression in proliferating cells. Enriched in the telencephalic region of the brain, spinal cord, intestinal crypt, tooth buds, thymus and salivary glands at stage 16.5 dpc. Also expressed in the ossification region of developing bones and in the periosteum.

It is found in the nucleus. Its subcellular location is the chromosome. It catalyses the reaction L-lysyl(36)-[histone H3] + 2 S-adenosyl-L-methionine = N(6),N(6)-dimethyl-L-lysyl(36)-[histone H3] + 2 S-adenosyl-L-homocysteine + 2 H(+). Functionally, histone methyltransferase that dimethylates Lys-36 of histone H3 (H3K36me2). Transcriptional intermediary factor capable of negatively influencing transcription. May also positively influence transcription. Essential for early post-implantation development. The polypeptide is Histone-lysine N-methyltransferase, H3 lysine-36 specific (Mus musculus (Mouse)).